We begin with the raw amino-acid sequence, 291 residues long: MDSRVSSPEKQDKENFVGVNNKRLGVCGWILFSLSFLLVIITFPISIWMCLKIIKEYERAVVFRLGRIQADKAKGPGLILVLPCIDVFVKVDLRTVTCNIPPQEILTRDSVTTQVDGVVYYRIYSAVSAVANVNDVHQATFLLAQTTLRNVLGTQTLSQILAGREEIAHSIQTLLDDATELWGIRVARVEIKDVRIPVQLQRSMAAEAEATREARAKVLAAEGEMNASKSLKSASMVLAESPIALQLRYLQTLSTVATEKNSTIVFPLPMNILEGIGGVSYDNHKKLPNKA.

Residue S7 is modified to Phosphoserine. A helical; Signal-anchor for type III membrane protein membrane pass occupies residues 29–49; it reads WILFSLSFLLVIITFPISIWM. Topologically, residues 50-291 are cytoplasmic; it reads CLKIIKEYER…DNHKKLPNKA (242 aa). At S241 the chain carries Phosphoserine.

This sequence belongs to the band 7/mec-2 family. Homodimer. Interacts with PIEZO1 and PIEZO2.

It localises to the cell membrane. Required for the function of many mechanoreceptors. Modulate mechanotransduction channels and acid-sensing ion channels (ASIC) proteins. Potentiates PIEZO1 and PIEZO2 function by increasing their sensitivity to mechanical stimulations. This Homo sapiens (Human) protein is Stomatin-like protein 3 (STOML3).